The sequence spans 116 residues: T cell receptor alpha variable 14/delta variable 4 (116 aa).

Positions 1-21 (MSLSSLLKVVTASLWLGPGIA) are cleaved as a signal peptide. The Ig-like domain occupies 22 to 116 (QKITQTQPGM…SAMYFCAMRE (95 aa)). Cys43 and Cys112 are joined by a disulfide. Asn78 carries an N-linked (GlcNAc...) asparagine glycan.

Alpha-beta TR is a heterodimer composed of an alpha and beta chain; disulfide-linked. The alpha-beta TR is associated with the transmembrane signaling CD3 coreceptor proteins to form the TR-CD3 (TcR or TCR). The assembly of alpha-beta TR heterodimers with CD3 occurs in the endoplasmic reticulum where a single alpha-beta TR heterodimer associates with one CD3D-CD3E heterodimer, one CD3G-CD3E heterodimer and one CD247 homodimer forming a stable octameric structure. CD3D-CD3E and CD3G-CD3E heterodimers preferentially associate with TR alpha and TR beta chains, respectively. The association of the CD247 homodimer is the last step of TcR assembly in the endoplasmic reticulum and is required for transport to the cell surface.

The protein localises to the cell membrane. Functionally, v region of the variable domain of T cell receptor (TR) alpha chain that participates in the antigen recognition. Alpha-beta T cell receptors are antigen specific receptors which are essential to the immune response and are present on the cell surface of T lymphocytes. Recognize peptide-major histocompatibility (MH) (pMH) complexes that are displayed by antigen presenting cells (APC), a prerequisite for efficient T cell adaptive immunity against pathogens. Binding of alpha-beta TR to pMH complex initiates TR-CD3 clustering on the cell surface and intracellular activation of LCK that phosphorylates the ITAM motifs of CD3G, CD3D, CD3E and CD247 enabling the recruitment of ZAP70. In turn ZAP70 phosphorylates LAT, which recruits numerous signaling molecules to form the LAT signalosome. The LAT signalosome propagates signal branching to three major signaling pathways, the calcium, the mitogen-activated protein kinase (MAPK) kinase and the nuclear factor NF-kappa-B (NF-kB) pathways, leading to the mobilization of transcription factors that are critical for gene expression and essential for T cell growth and differentiation. The T cell repertoire is generated in the thymus, by V-(D)-J rearrangement. This repertoire is then shaped by intrathymic selection events to generate a peripheral T cell pool of self-MH restricted, non-autoaggressive T cells. Post-thymic interaction of alpha-beta TR with the pMH complexes shapes TR structural and functional avidity. The protein is T cell receptor alpha variable 14/delta variable 4 of Homo sapiens (Human).